The following is a 138-amino-acid chain: Ribosomal RNA large subunit methyltransferase H (138 aa).

S-adenosyl-L-methionine is bound by residues Leu-57, Gly-86, and Leu-105 to Phe-110.

Belongs to the RNA methyltransferase RlmH family. In terms of assembly, homodimer.

The protein localises to the cytoplasm. The enzyme catalyses pseudouridine(1915) in 23S rRNA + S-adenosyl-L-methionine = N(3)-methylpseudouridine(1915) in 23S rRNA + S-adenosyl-L-homocysteine + H(+). Specifically methylates the pseudouridine at position 1915 (m3Psi1915) in 23S rRNA. This Prochlorococcus marinus (strain MIT 9312) protein is Ribosomal RNA large subunit methyltransferase H.